We begin with the raw amino-acid sequence, 169 residues long: Diuretic hormone 44 (169 aa).

The first 18 residues, M1–S18, serve as a signal peptide directing secretion. Residues A19–R96 constitute a propeptide that is removed on maturation. The stretch at M83–I108 forms a coiled coil. Q97 carries the pyrrolidone carboxylic acid modification. I108 is modified (isoleucine amide). A propeptide spanning residues G109–L169 is cleaved from the precursor.

Post-translationally, residues Ile-66 to Gly-109 may constitute another form of the DH44 peptide, which has not been detected yet. Expressed in brain, ventral ganglia and the retrocerebral complex (at protein level).

The protein resides in the secreted. Its function is as follows. Regulation of fluid secretion. The polypeptide is Diuretic hormone 44 (Camponotus floridanus (Florida carpenter ant)).